The primary structure comprises 35 residues: Photosystem II reaction center protein T (35 aa).

A helical membrane pass occupies residues 3 to 23 (ALVYTFLLVGTLGIIFFAIFF).

Belongs to the PsbT family. In terms of assembly, PSII is composed of 1 copy each of membrane proteins PsbA, PsbB, PsbC, PsbD, PsbE, PsbF, PsbH, PsbI, PsbJ, PsbK, PsbL, PsbM, PsbT, PsbY, PsbZ, Psb30/Ycf12, at least 3 peripheral proteins of the oxygen-evolving complex and a large number of cofactors. It forms dimeric complexes.

The protein localises to the plastid. It localises to the chloroplast thylakoid membrane. Functionally, found at the monomer-monomer interface of the photosystem II (PS II) dimer, plays a role in assembly and dimerization of PSII. PSII is a light-driven water plastoquinone oxidoreductase, using light energy to abstract electrons from H(2)O, generating a proton gradient subsequently used for ATP formation. The sequence is that of Photosystem II reaction center protein T from Staurastrum punctulatum (Green alga).